The primary structure comprises 146 residues: Hemoglobin subunit beta (146 aa).

N-acetylvaline is present on Val-1. A Globin domain is found at 2-146 (HLTAEEKSAV…VATALAHKYH (145 aa)). Thr-12 carries the phosphothreonine modification. At Ser-44 the chain carries Phosphoserine. Lys-59 carries the N6-acetyllysine modification. A heme b-binding site is contributed by His-63. Lys-82 carries the N6-acetyllysine modification. His-92 contributes to the heme b binding site. Cys-93 carries the post-translational modification S-nitrosocysteine. Residue Lys-144 is modified to N6-acetyllysine.

This sequence belongs to the globin family. As to quaternary structure, heterotetramer of two alpha chains and two beta chains. In terms of tissue distribution, red blood cells.

Its function is as follows. Involved in oxygen transport from the lung to the various peripheral tissues. The sequence is that of Hemoglobin subunit beta (HBB) from Cebus albifrons (White-fronted capuchin).